Here is an 89-residue protein sequence, read N- to C-terminus: Small ribosomal subunit protein uS15 (89 aa).

The protein belongs to the universal ribosomal protein uS15 family. In terms of assembly, part of the 30S ribosomal subunit. Forms a bridge to the 50S subunit in the 70S ribosome, contacting the 23S rRNA.

One of the primary rRNA binding proteins, it binds directly to 16S rRNA where it helps nucleate assembly of the platform of the 30S subunit by binding and bridging several RNA helices of the 16S rRNA. Its function is as follows. Forms an intersubunit bridge (bridge B4) with the 23S rRNA of the 50S subunit in the ribosome. The protein is Small ribosomal subunit protein uS15 of Cyanothece sp. (strain PCC 7425 / ATCC 29141).